A 387-amino-acid chain; its full sequence is Anhydro-N-acetylmuramic acid kinase (387 aa).

17-24 (GTSMDGVD) contributes to the ATP binding site.

This sequence belongs to the anhydro-N-acetylmuramic acid kinase family.

It catalyses the reaction 1,6-anhydro-N-acetyl-beta-muramate + ATP + H2O = N-acetyl-D-muramate 6-phosphate + ADP + H(+). Its pathway is amino-sugar metabolism; 1,6-anhydro-N-acetylmuramate degradation. It functions in the pathway cell wall biogenesis; peptidoglycan recycling. Its function is as follows. Catalyzes the specific phosphorylation of 1,6-anhydro-N-acetylmuramic acid (anhMurNAc) with the simultaneous cleavage of the 1,6-anhydro ring, generating MurNAc-6-P. Is required for the utilization of anhMurNAc either imported from the medium or derived from its own cell wall murein, and thus plays a role in cell wall recycling. In Burkholderia pseudomallei (strain 1710b), this protein is Anhydro-N-acetylmuramic acid kinase.